Consider the following 140-residue polypeptide: Cytochrome c-type biogenesis protein CcmE (140 aa).

The Cytoplasmic portion of the chain corresponds to 1–7; sequence MKRKHKR. The helical; Signal-anchor for type II membrane protein transmembrane segment at 8 to 28 threads the bilayer; sequence LLFVLASFCAAGCALLFILSE. Residues 29–140 lie on the Periplasmic side of the membrane; that stretch reads LRESVSFFYT…TIPKALPEPK (112 aa). Positions 121 and 125 each coordinate heme.

It belongs to the CcmE/CycJ family.

Its subcellular location is the cell inner membrane. Functionally, heme chaperone required for the biogenesis of c-type cytochromes. Transiently binds heme delivered by CcmC and transfers the heme to apo-cytochromes in a process facilitated by CcmF and CcmH. The chain is Cytochrome c-type biogenesis protein CcmE from Anaplasma marginale (strain Florida).